Consider the following 76-residue polypeptide: uncharacterized protein (76 aa).

This sequence belongs to the IIV-6 342R family.

This is an uncharacterized protein from Invertebrate iridescent virus 3 (IIV-3).